The primary structure comprises 297 residues: Acetylglutamate kinase (297 aa).

Substrate-binding positions include Gly-72–Gly-73, Arg-94, and Asn-187.

The protein belongs to the acetylglutamate kinase family. ArgB subfamily.

It is found in the cytoplasm. It catalyses the reaction N-acetyl-L-glutamate + ATP = N-acetyl-L-glutamyl 5-phosphate + ADP. It participates in amino-acid biosynthesis; L-arginine biosynthesis; N(2)-acetyl-L-ornithine from L-glutamate: step 2/4. In terms of biological role, catalyzes the ATP-dependent phosphorylation of N-acetyl-L-glutamate. The protein is Acetylglutamate kinase of Synechocystis sp. (strain ATCC 27184 / PCC 6803 / Kazusa).